The sequence spans 434 residues: Lecithin-cholesterol acyltransferase-like 1 (434 aa).

Catalysis depends on serine 191, which acts as the Acyl-ester intermediate. Catalysis depends on charge relay system residues aspartate 354 and histidine 386.

The protein belongs to the AB hydrolase superfamily. Lipase family.

The polypeptide is Lecithin-cholesterol acyltransferase-like 1 (Oryza sativa subsp. japonica (Rice)).